Consider the following 608-residue polypeptide: Glutamine--fructose-6-phosphate aminotransferase [isomerizing] (608 aa).

Cys-2 serves as the catalytic Nucleophile; for GATase activity. Residues 2–217 form the Glutamine amidotransferase type-2 domain; that stretch reads CGIVGYIGDK…DHEIAIIKKD (216 aa). 2 SIS domains span residues 285–424 and 453–598; these read TKED…KKGT and VIQK…VDKP. The active-site For Fru-6P isomerization activity is Lys-603.

As to quaternary structure, homodimer.

The protein localises to the cytoplasm. The catalysed reaction is D-fructose 6-phosphate + L-glutamine = D-glucosamine 6-phosphate + L-glutamate. Catalyzes the first step in hexosamine metabolism, converting fructose-6P into glucosamine-6P using glutamine as a nitrogen source. The polypeptide is Glutamine--fructose-6-phosphate aminotransferase [isomerizing] (Caldanaerobacter subterraneus subsp. tengcongensis (strain DSM 15242 / JCM 11007 / NBRC 100824 / MB4) (Thermoanaerobacter tengcongensis)).